The following is a 180-amino-acid chain: Inner membrane-spanning protein YciB (180 aa).

Transmembrane regions (helical) follow at residues 22–42 (IFVA…FTWF), 50–70 (MTLV…AFHS), 72–92 (LFIK…LLVS), 121–141 (MSWA…AFWL), and 149–169 (FKVF…GVYI).

Belongs to the YciB family.

It localises to the cell inner membrane. Functionally, plays a role in cell envelope biogenesis, maintenance of cell envelope integrity and membrane homeostasis. The protein is Inner membrane-spanning protein YciB of Yersinia enterocolitica serotype O:8 / biotype 1B (strain NCTC 13174 / 8081).